An 893-amino-acid polypeptide reads, in one-letter code: Alpha-actinin-1 (893 aa).

The actin-binding stretch occupies residues 1–248 (MDHHYDPQQT…IMTYVSSFYH (248 aa)). Tyr-13 is modified (phosphotyrosine; by FAK1). Calponin-homology (CH) domains follow at residues 32–136 (KQQR…LRFA) and 145–251 (TSAK…HAFS). Spectrin repeat units lie at residues 275–385 (QLME…WLLN), 395–500 (HLAE…ALER), 510–621 (QLYL…ALME), and 631–734 (RLRK…EVEN). 2 consecutive EF-hand domains span residues 747–782 (EQMN…LGYD) and 788–823 (QGEA…ETAD). Residues Asp-760, Asp-762, Ser-764, Thr-766, and Glu-771 each contribute to the Ca(2+) site.

Belongs to the alpha-actinin family. As to quaternary structure, homodimer; antiparallel. Interacts with PDLIM4 (via PDZ domain).

The protein resides in the cytoplasm. Its subcellular location is the cytoskeleton. The protein localises to the myofibril. It localises to the sarcomere. It is found in the z line. The protein resides in the cell membrane. Its subcellular location is the cell junction. The protein localises to the cell projection. It localises to the ruffle. Its function is as follows. F-actin cross-linking protein is thought to anchor actin to a variety of intracellular structures. This is a bundling protein. This chain is Alpha-actinin-1 (ACTN1), found in Gallus gallus (Chicken).